A 243-amino-acid polypeptide reads, in one-letter code: Protein unc-119 homolog B (243 aa).

A compositionally biased stretch (polar residues) spans 1–21 (MNSQSSRNETAATAVNGSDSA). Residues 1–49 (MNSQSSRNETAATAVNGSDSAAASRDHKSGGGVLKRLKSRRNQVDRRPV) form a disordered region. Tyr-134 is a binding site for tetradecanoate.

It belongs to the PDE6D/unc-119 family. Detected in embryo. Detected in larvae four days after fertilization, in retina and neural tissues (at protein level). Detected in embryos at the sphere stage, during gastrulation, somitogenesis and in swimming larvae, both within and outside of the developing nervous system. Detected in adults.

Its subcellular location is the cell projection. It localises to the cilium. Functionally, myristoyl-binding protein that acts as a cargo adapter: specifically binds the myristoyl moiety of a subset of N-terminally myristoylated proteins and is required for their localization. Plays a key role in localization of proteins to the primary cilium membrane. The polypeptide is Protein unc-119 homolog B (unc119b) (Danio rerio (Zebrafish)).